We begin with the raw amino-acid sequence, 185 residues long: Ribosome-recycling factor (185 aa).

This sequence belongs to the RRF family.

The protein resides in the cytoplasm. Its function is as follows. Responsible for the release of ribosomes from messenger RNA at the termination of protein biosynthesis. May increase the efficiency of translation by recycling ribosomes from one round of translation to another. This chain is Ribosome-recycling factor, found in Shewanella baltica (strain OS185).